The primary structure comprises 2254 residues: Genome polyprotein (2254 aa).

The region spanning 438–592 is the SF3 helicase domain; it reads QTTINELAQL…EQWLVDNPGR (155 aa). 464-471 lines the ATP pocket; it reads GPPGIGKT. Tyr-956 carries the post-translational modification O-(5'-phospho-RNA)-tyrosine. Residues 1041–1196 form the Peptidase C24 domain; that stretch reads GDTYDSEGRG…KKLVSRVQTK (156 aa). Active-site for 3CLpro activity residues include His-1078, Asp-1099, and Cys-1163. The region spanning 1434–1559 is the RdRp catalytic domain; the sequence is RVLYCLDYSK…GLTPATASIM (126 aa). The tract at residues 1714 to 1742 is disordered; it reads PAPTRSVASNPEGTQNSNESRPVQPAGPM. Positions 1719 to 1734 are enriched in polar residues; sequence SVASNPEGTQNSNESR.

As to quaternary structure, homodimer. Homomultimer. Interacts with host IEF4E; this interaction plays a role in translation of viral proteins. Specific enzymatic cleavages in vivo yield mature proteins. Pro-Pol is first autocatalytically cleaved, then processes the whole polyprotein. Post-translationally, VPg is uridylylated by the polymerase and is covalently attached to the 5'-end of the polyadenylated genomic and subgenomic RNAs. This uridylylated form acts as a nucleotide-peptide primer for the polymerase.

It is found in the virion. The protein resides in the host cytoplasm. It carries out the reaction a ribonucleoside 5'-triphosphate + H2O = a ribonucleoside 5'-diphosphate + phosphate + H(+). It catalyses the reaction RNA(n) + a ribonucleoside 5'-triphosphate = RNA(n+1) + diphosphate. The enzyme catalyses Endopeptidase with a preference for cleavage when the P1 position is occupied by Glu-|-Xaa and the P1' position is occupied by Gly-|-Yaa.. Together with NTPase and NS4, initiates the formation of the replication complex. Induces the proliferation of the host smooth ER membranes forming long tubular structures. These remodeled membranes probably form the viral factories that contain the replication complex. Its function is as follows. Displays NTPase activity, but no helicase activity. Induces the formation of convoluted membranes derived from the host ER. These remodeled membranes probably form the viral factories that contain the replication complex. Together with NS2 and NS4, initiates the formation of the replication complex. Functionally, probable key protein responsible for the formation of membrane alterations by the virus. Induces the formation of convoluted membranes derived from the host ER. These remodeled membranes probably form the viral factories that contain the replication complex. Together with NS2 and NTPase, initiates the formation of the replication complex. In terms of biological role, viral genome-linked protein is covalently linked to the 5'-end of the positive-strand, negative-strand genomic RNAs and subgenomic RNA. Acts as a genome-linked replication primer. May recruit ribosome to viral RNA thereby promoting viral proteins translation. Interacts with host translation initiation complex to allow the translation of viral proteins. Protease-polymerase p76 processes the polyprotein: Pro-Pol is first released by autocleavage, then all other proteins are cleaved. Cleaves host translation initiation factor eIF4G1, eIF4G2 and PABP1 thereby inducing a shutdown of host protein synthesis. This shutdown may not prevent viral mRNA from being translated since viral Vpg replaces the cap. It is also an RNA-directed RNA polymerase which replicates genomic and antigenomic viral RNA by recognizing specific signals. Also transcribes a subgenomic mRNA by initiating RNA synthesis internally on antigenomic RNA. This sgRNA codes for structural proteins. Catalyzes the covalent attachment VPg with viral RNAs. Its function is as follows. Capsid protein self assembles to form an icosahedral capsid with a T=3 symmetry, about 38 nm in diameter, and consisting of 180 capsid proteins. The capsid encapsulate the genomic RNA and VP2 proteins. Attaches virion to target cells, inducing endocytosis of the viral particle. Acidification of the endosome induces conformational change of capsid protein thereby injecting virus genomic RNA into host cytoplasm. The polypeptide is Genome polyprotein (Porcine enteric sapovirus (isolate Swine/United States/Cowden/1980) (Sw/SV/Cowden/1980/US)).